We begin with the raw amino-acid sequence, 509 residues long: Dihydrolipoyl dehydrogenase, mitochondrial (509 aa).

The N-terminal 35 residues, 1 to 35 (MQSWSRVYCSLAKRGHFNRISHGLQGLSAVPLRTY), are a transit peptide targeting the mitochondrion. At K66 the chain carries N6-acetyllysine; alternate. The residue at position 66 (K66) is an N6-succinyllysine; alternate. FAD contacts are provided by residues 71–80 (EKNETLGGTC) and K89. An intrachain disulfide couples C80 to C85. K104, K122, K132, and K143 each carry N6-acetyllysine; alternate. N6-succinyllysine; alternate occurs at positions 104, 122, 132, and 143. G154 is a binding site for FAD. 2 positions are modified to N6-succinyllysine: K159 and K166. 183–185 (TGS) provides a ligand contact to FAD. Residues 220 to 227 (GAGVIGVE) and E243 contribute to the NAD(+) site. K273 and K277 each carry N6-succinyllysine. Position 278 (V278) interacts with NAD(+). Phosphoserine occurs at positions 285 and 297. G314 lines the NAD(+) pocket. Position 346 is an N6-acetyllysine (K346). FAD contacts are provided by residues D355 and 361 to 364 (MLAH). At K410 the chain carries N6-acetyllysine; alternate. K410 carries the N6-succinyllysine; alternate modification. N6-acetyllysine is present on residues K417 and K420. Position 430 is an N6-succinyllysine (K430). H487 functions as the Proton acceptor in the catalytic mechanism. S502 carries the post-translational modification Phosphoserine. An N6-acetyllysine; alternate modification is found at K505. N6-succinyllysine; alternate is present on K505.

The protein belongs to the class-I pyridine nucleotide-disulfide oxidoreductase family. Homodimer. Part of the multimeric pyruvate dehydrogenase complex that contains multiple copies of pyruvate dehydrogenase (subunits PDHA (PDHA1 or PDHA2) and PDHB, E1), dihydrolipoamide acetyltransferase (DLAT, E2) and lipoamide dehydrogenase (DLD, E3). These subunits are bound to an inner core composed of about 48 DLAT and 12 PDHX molecules (by non covalent bonds). The 2-oxoglutarate dehydrogenase complex is composed of OGDH (2-oxoglutarate dehydrogenase; E1), DLST (dihydrolipoamide succinyltransferase; E2), DLD (dihydrolipoamide dehydrogenase; E3) and the assembly factor KGD4. It contains multiple copies of the three enzymatic components (E1, E2 and E3). In the nucleus, the 2-oxoglutarate dehydrogenase complex associates with KAT2A. Interacts with PDHX. Requires FAD as cofactor. Post-translationally, tyrosine phosphorylated.

The protein resides in the mitochondrion matrix. The protein localises to the nucleus. Its subcellular location is the cell projection. It localises to the cilium. It is found in the flagellum. The protein resides in the cytoplasmic vesicle. The protein localises to the secretory vesicle. Its subcellular location is the acrosome. It catalyses the reaction N(6)-[(R)-dihydrolipoyl]-L-lysyl-[protein] + NAD(+) = N(6)-[(R)-lipoyl]-L-lysyl-[protein] + NADH + H(+). Its function is as follows. Lipoamide dehydrogenase is a component of the glycine cleavage system as well as an E3 component of three alpha-ketoacid dehydrogenase complexes (pyruvate-, alpha-ketoglutarate-, and branched-chain amino acid-dehydrogenase complex). The 2-oxoglutarate dehydrogenase complex is mainly active in the mitochondrion. A fraction of the 2-oxoglutarate dehydrogenase complex also localizes in the nucleus and is required for lysine succinylation of histones: associates with KAT2A on chromatin and provides succinyl-CoA to histone succinyltransferase KAT2A. In monomeric form may have additional moonlighting function as serine protease. Involved in the hyperactivation of spermatazoa during capacitation and in the spermatazoal acrosome reaction. The sequence is that of Dihydrolipoyl dehydrogenase, mitochondrial (DLD) from Macaca fascicularis (Crab-eating macaque).